The chain runs to 192 residues: Cytidylate kinase (192 aa).

7–15 (GPAGSGKST) serves as a coordination point for ATP.

This sequence belongs to the cytidylate kinase family. Type 2 subfamily.

It localises to the cytoplasm. The enzyme catalyses CMP + ATP = CDP + ADP. It carries out the reaction dCMP + ATP = dCDP + ADP. The sequence is that of Cytidylate kinase from Natronomonas pharaonis (strain ATCC 35678 / DSM 2160 / CIP 103997 / JCM 8858 / NBRC 14720 / NCIMB 2260 / Gabara) (Halobacterium pharaonis).